The chain runs to 79 residues: Bacteriochlorophyll c-binding protein (79 aa).

His-25 lines the a bacteriochlorophyll c pocket.

It belongs to the BChl C/E-binding protein family.

Its subcellular location is the chlorosome. It localises to the chlorosome envelope. Component of the photosynthetic apparatus. The light harvesting B740 complex binds bacteriochlorophyll c. The sequence is that of Bacteriochlorophyll c-binding protein (csmA) from Chlorobaculum tepidum (strain ATCC 49652 / DSM 12025 / NBRC 103806 / TLS) (Chlorobium tepidum).